The primary structure comprises 100 residues: Cytochrome c2 iso-1 (100 aa).

Residues C11, C14, H15, and M76 each coordinate heme c.

It belongs to the cytochrome c family. Post-translationally, binds 1 heme c group covalently per subunit.

In terms of biological role, cytochrome c2 is found mainly in purple, non-sulfur, photosynthetic bacteria where it functions as the electron donor to the oxidized bacteriochlorophyll in the photophosphorylation pathway. However, it may also have a role in the respiratory chain and is found in some non-photosynthetic bacteria. In Magnetospirillum molischianum (Rhodospirillum molischianum), this protein is Cytochrome c2 iso-1.